We begin with the raw amino-acid sequence, 569 residues long: Potassium-transporting ATPase potassium-binding subunit (569 aa).

A run of 10 helical transmembrane segments spans residues 3–23, 68–88, 136–156, 179–199, 259–279, 284–304, 384–404, 422–442, 490–510, and 534–554; these read LMEY…SPVL, AASL…VLML, VGLA…AVAV, VLYV…GQGV, LQML…GGAV, HAWT…CSLY, GLYG…LMVG, AMLA…VAAV, IALA…GVAG, and LLLT…ALAL.

This sequence belongs to the KdpA family. As to quaternary structure, the system is composed of three essential subunits: KdpA, KdpB and KdpC.

It localises to the cell inner membrane. Part of the high-affinity ATP-driven potassium transport (or Kdp) system, which catalyzes the hydrolysis of ATP coupled with the electrogenic transport of potassium into the cytoplasm. This subunit binds the periplasmic potassium ions and delivers the ions to the membrane domain of KdpB through an intramembrane tunnel. The polypeptide is Potassium-transporting ATPase potassium-binding subunit (Nitratidesulfovibrio vulgaris (strain ATCC 29579 / DSM 644 / CCUG 34227 / NCIMB 8303 / VKM B-1760 / Hildenborough) (Desulfovibrio vulgaris)).